The sequence spans 484 residues: Aspartyl/glutamyl-tRNA(Asn/Gln) amidotransferase subunit B (484 aa).

This sequence belongs to the GatB/GatE family. GatB subfamily. Heterotrimer of A, B and C subunits.

It carries out the reaction L-glutamyl-tRNA(Gln) + L-glutamine + ATP + H2O = L-glutaminyl-tRNA(Gln) + L-glutamate + ADP + phosphate + H(+). It catalyses the reaction L-aspartyl-tRNA(Asn) + L-glutamine + ATP + H2O = L-asparaginyl-tRNA(Asn) + L-glutamate + ADP + phosphate + 2 H(+). Its function is as follows. Allows the formation of correctly charged Asn-tRNA(Asn) or Gln-tRNA(Gln) through the transamidation of misacylated Asp-tRNA(Asn) or Glu-tRNA(Gln) in organisms which lack either or both of asparaginyl-tRNA or glutaminyl-tRNA synthetases. The reaction takes place in the presence of glutamine and ATP through an activated phospho-Asp-tRNA(Asn) or phospho-Glu-tRNA(Gln). This Anaeromyxobacter sp. (strain K) protein is Aspartyl/glutamyl-tRNA(Asn/Gln) amidotransferase subunit B.